Reading from the N-terminus, the 376-residue chain is 3-dehydroquinate synthase (376 aa).

NAD(+)-binding positions include 115-119, 139-140, Lys152, and Lys161; these read GVIGD and TS. 3 residues coordinate Zn(2+): Glu194, His256, and His275.

This sequence belongs to the sugar phosphate cyclases superfamily. Dehydroquinate synthase family. Co(2+) is required as a cofactor. It depends on Zn(2+) as a cofactor. NAD(+) serves as cofactor.

The protein resides in the cytoplasm. It carries out the reaction 7-phospho-2-dehydro-3-deoxy-D-arabino-heptonate = 3-dehydroquinate + phosphate. The protein operates within metabolic intermediate biosynthesis; chorismate biosynthesis; chorismate from D-erythrose 4-phosphate and phosphoenolpyruvate: step 2/7. In terms of biological role, catalyzes the conversion of 3-deoxy-D-arabino-heptulosonate 7-phosphate (DAHP) to dehydroquinate (DHQ). This Rhizobium etli (strain CIAT 652) protein is 3-dehydroquinate synthase.